Here is a 96-residue protein sequence, read N- to C-terminus: MTEYKLVVVGAGGVGKSALTIQLIQNHFVDEYDPTIEDSYRKQVVIDGETCLLDILDTAGQEEYSAMRDQYMRTGEGFLCVFAINNTKSFEDIHQY.

M1 is modified (N-acetylmethionine). Position 2 is an N-acetylthreonine; in GTPase HRas, N-terminally processed (T2). 10 to 17 (GAGGVGKS) provides a ligand contact to GTP. The short motif at 32 to 40 (YDPTIEDSY) is the Effector region element. Residue 57-61 (DTAGQ) coordinates GTP.

It belongs to the small GTPase superfamily. Ras family. In its GTP-bound form interacts with PLCE1. Interacts with TBC1D10C. Interacts with RGL3. Interacts with HSPD1. Found in a complex with at least BRAF, HRAS, MAP2K1, MAPK3 and RGS14. Interacts (active GTP-bound form) with RGS14 (via RBD 1 domain). Forms a signaling complex with RASGRP1 and DGKZ. Interacts with RASSF5. Interacts with PDE6D. Interacts with IKZF3. Interacts with RACK1. Interacts with PIK3CG; the interaction is required for membrane recruitment and beta-gamma G protein dimer-dependent activation of the PI3K gamma complex PIK3CG:PIK3R6. Interacts with RAPGEF2. Interacts (active GTP-bound form) with both SHOC2 and PP1c (all isoforms) to form a tertiary complex; SHOC2 and PP1c preferably bind M-Ras/MRAS, but they also bind K-Ras/KRAS, N-Ras/NRAS and H-Ras/HRAS. Interacts (in GTP-bound form) with Oog1. Interacts (GTP-bound form) with MAPKAP1/SIN1; inhibiting H-Ras/HRAS activity. Ubiquitinated by the BCR(LZTR1) E3 ubiquitin ligase complex at Lys-170 in a non-degradative manner, leading to inhibit Ras signaling by decreasing Ras association with membranes.

The protein resides in the cell membrane. The protein localises to the golgi apparatus. Its subcellular location is the golgi apparatus membrane. The catalysed reaction is GTP + H2O = GDP + phosphate + H(+). With respect to regulation, alternates between an inactive form bound to GDP and an active form bound to GTP. Activated by a guanine nucleotide-exchange factor (GEF) and inactivated by a GTPase-activating protein (GAP). In terms of biological role, ras proteins bind GDP/GTP and possess intrinsic GTPase activity. The protein is GTPase HRas (HRAS) of Mesocricetus auratus (Golden hamster).